The chain runs to 213 residues: Large ribosomal subunit protein uL3 (213 aa).

Residues 122–147 (AIKRHGQSRGPMAHGSRYHRRPGSMG) are disordered.

This sequence belongs to the universal ribosomal protein uL3 family. Part of the 50S ribosomal subunit. Forms a cluster with proteins L14 and L19.

One of the primary rRNA binding proteins, it binds directly near the 3'-end of the 23S rRNA, where it nucleates assembly of the 50S subunit. The sequence is that of Large ribosomal subunit protein uL3 from Geobacillus stearothermophilus (Bacillus stearothermophilus).